A 341-amino-acid chain; its full sequence is Methionine import ATP-binding protein MetN (341 aa).

The ABC transporter domain maps to 2–241; that stretch reads INLQDVSKVY…PKEQMTKRFV (240 aa). An ATP-binding site is contributed by 38–45; sequence GYSGAGKS.

The protein belongs to the ABC transporter superfamily. Methionine importer (TC 3.A.1.24) family. As to quaternary structure, the complex is composed of two ATP-binding proteins (MetN), two transmembrane proteins (MetP) and a solute-binding protein (MetQ).

It is found in the cell membrane. The catalysed reaction is L-methionine(out) + ATP + H2O = L-methionine(in) + ADP + phosphate + H(+). It catalyses the reaction D-methionine(out) + ATP + H2O = D-methionine(in) + ADP + phosphate + H(+). Part of the ABC transporter complex MetNPQ involved in methionine import. Responsible for energy coupling to the transport system. It has also been shown to be involved in methionine sulfoxide transport. The sequence is that of Methionine import ATP-binding protein MetN from Bacillus subtilis (strain 168).